Here is a 357-residue protein sequence, read N- to C-terminus: 3-isopropylmalate dehydrogenase (357 aa).

76 to 89 (GPQWDTIDPALRPE) contributes to the NAD(+) binding site. The substrate site is built by Arg96, Arg106, Arg134, and Asp224. Residues Asp224, Asp248, and Asp252 each contribute to the Mg(2+) site. 282–294 (GSAPDIAGQGVAN) contributes to the NAD(+) binding site.

The protein belongs to the isocitrate and isopropylmalate dehydrogenases family. LeuB type 1 subfamily. Homodimer. Mg(2+) is required as a cofactor. Mn(2+) serves as cofactor.

It localises to the cytoplasm. It carries out the reaction (2R,3S)-3-isopropylmalate + NAD(+) = 4-methyl-2-oxopentanoate + CO2 + NADH. It functions in the pathway amino-acid biosynthesis; L-leucine biosynthesis; L-leucine from 3-methyl-2-oxobutanoate: step 3/4. Functionally, catalyzes the oxidation of 3-carboxy-2-hydroxy-4-methylpentanoate (3-isopropylmalate) to 3-carboxy-4-methyl-2-oxopentanoate. The product decarboxylates to 4-methyl-2 oxopentanoate. This chain is 3-isopropylmalate dehydrogenase, found in Xylella fastidiosa (strain 9a5c).